The following is a 145-amino-acid chain: Large ribosomal subunit protein uL13 (145 aa).

Belongs to the universal ribosomal protein uL13 family. In terms of assembly, part of the 50S ribosomal subunit.

Functionally, this protein is one of the early assembly proteins of the 50S ribosomal subunit, although it is not seen to bind rRNA by itself. It is important during the early stages of 50S assembly. This Bacillus cereus (strain ZK / E33L) protein is Large ribosomal subunit protein uL13.